We begin with the raw amino-acid sequence, 522 residues long: Biotin-dependent long chain acyl-coenzyme A carboxylase beta4 subunit (522 aa).

In terms of domain architecture, CoA carboxyltransferase N-terminal spans 11–261; it reads TAEKLAELRE…NCFDKPPVVN (251 aa). In terms of domain architecture, CoA carboxyltransferase C-terminal spans 270 to 503; it reads GHDLELDSIV…RLLLRKSMHL (234 aa).

This sequence belongs to the AccD/PCCB family. The biotin-dependent long-chain acyl-CoA carboxylase (LCC) complex is composed of AccA3, which contains the biotin carboxylase (BC) and biotin carboxyl carrier protein (BCCP) domains, and AccD4, which contains the carboxyl transferase (CT) domain. The complex also contains the beta5 subunit AccD5 and the epsilon subunit AccE5. The four subunits are essential for activity, but AccD5, together with AccE5, probably plays a structural role rather than a catalytic one.

Its function is as follows. Component of a biotin-dependent acyl-CoA carboxylase complex. This subunit transfers the CO2 from carboxybiotin to the CoA ester substrate. When associated with the alpha3 subunit AccA3, the beta5 subunit AccD5 and the epsilon subunit AccE5, forms the LCC complex, which is involved in the carboxylation of long chain acyl-CoA. The LCC complex can use C16-C24 substrates, the highest specific activity is obtained with carboxy-C20-CoA. Has low activity with acetyl-CoA and propionyl-CoA. The chain is Biotin-dependent long chain acyl-coenzyme A carboxylase beta4 subunit from Mycobacterium tuberculosis (strain ATCC 25618 / H37Rv).